Reading from the N-terminus, the 298-residue chain is Cytochrome c oxidase subunit 2 (298 aa).

The first 29 residues, 1–29, serve as a signal peptide directing secretion; it reads MMAIATKRRGVAAVMSLGVATMTAVPALA. Position 30 is a pyrrolidone carboxylic acid (Gln-30). Residues 30–55 are Periplasmic-facing; that stretch reads QDVLGDLPVIGKPVNGGMNFQPASSP. Residues 56–88 form a helical membrane-spanning segment; sequence LAHDQQWLDHFVLYIITAVTIFVCLLLLICIVR. The Cytoplasmic segment spans residues 89 to 103; that stretch reads FNRRANPVPARFTHN. A helical membrane pass occupies residues 104–134; it reads TPIEVIWTLVPVLILVAIGAFSLPILFRSQE. The Periplasmic portion of the chain corresponds to 135–280; the sequence is MPNDPDLVIK…WLAGAKEEFA (146 aa). Positions 210, 245, 247, 249, 253, and 256 each coordinate Cu cation. Residues 281–298 constitute a propeptide, C-terminal propeptide; it reads ADASDYLPASPVKLASAE.

The protein belongs to the cytochrome c oxidase subunit 2 family. Requires binuclear copper center (CuA) as cofactor.

The protein localises to the cell inner membrane. It carries out the reaction 4 Fe(II)-[cytochrome c] + O2 + 8 H(+)(in) = 4 Fe(III)-[cytochrome c] + 2 H2O + 4 H(+)(out). Subunits I and II form the functional core of the enzyme complex. Electrons originating in cytochrome c are transferred via heme a and Cu(A) to the binuclear center formed by heme a3 and Cu(B). The chain is Cytochrome c oxidase subunit 2 (ctaC) from Paracoccus denitrificans.